The following is a 261-amino-acid chain: RING-H2 finger protein ATL58 (261 aa).

A helical transmembrane segment spans residues 25-45; that stretch reads AFIFSVPICFTFIILFLFYLI. An RING-type; atypical zinc finger spans residues 100–142; it reads CSVCLGDYQPNDKLQQIPVCKHTFHMDCIDLWLTSHTTCPLCR. Disordered regions lie at residues 149–227 and 241–261; these read RSRQ…NDGH and MEED…CRTG. A compositionally biased stretch (polar residues) spans 194–221; sequence SGVSSQPESQPVVNHRGVSSQPESQPVN.

The protein belongs to the RING-type zinc finger family. ATL subfamily.

The protein localises to the membrane. The enzyme catalyses S-ubiquitinyl-[E2 ubiquitin-conjugating enzyme]-L-cysteine + [acceptor protein]-L-lysine = [E2 ubiquitin-conjugating enzyme]-L-cysteine + N(6)-ubiquitinyl-[acceptor protein]-L-lysine.. It functions in the pathway protein modification; protein ubiquitination. This is RING-H2 finger protein ATL58 (ATL58) from Arabidopsis thaliana (Mouse-ear cress).